Consider the following 510-residue polypeptide: D-alanine--D-alanyl carrier protein ligase (510 aa).

157-158 serves as a coordination point for ATP; that stretch reads TS. Position 202 (aspartate 202) interacts with D-alanine. 297-302 contacts ATP; that stretch reads NTYGPT. D-alanine is bound at residue valine 306. ATP-binding residues include aspartate 389 and lysine 498. Lysine 498 lines the D-alanine pocket.

The protein belongs to the ATP-dependent AMP-binding enzyme family. DltA subfamily.

It is found in the cytoplasm. It catalyses the reaction holo-[D-alanyl-carrier protein] + D-alanine + ATP = D-alanyl-[D-alanyl-carrier protein] + AMP + diphosphate. Its pathway is cell wall biogenesis; lipoteichoic acid biosynthesis. Its function is as follows. Catalyzes the first step in the D-alanylation of lipoteichoic acid (LTA), the activation of D-alanine and its transfer onto the D-alanyl carrier protein (Dcp) DltC. In an ATP-dependent two-step reaction, forms a high energy D-alanyl-AMP intermediate, followed by transfer of the D-alanyl residue as a thiol ester to the phosphopantheinyl prosthetic group of the Dcp. D-alanylation of LTA plays an important role in modulating the properties of the cell wall in Gram-positive bacteria, influencing the net charge of the cell wall. The sequence is that of D-alanine--D-alanyl carrier protein ligase from Listeria welshimeri serovar 6b (strain ATCC 35897 / DSM 20650 / CCUG 15529 / CIP 8149 / NCTC 11857 / SLCC 5334 / V8).